The following is a 456-amino-acid chain: Trigger factor (456 aa).

In terms of domain architecture, PPIase FKBP-type spans 192-277 (GDTVVIDFVG…IHEVKTKEVP (86 aa)).

The protein belongs to the FKBP-type PPIase family. Tig subfamily.

It is found in the cytoplasm. The enzyme catalyses [protein]-peptidylproline (omega=180) = [protein]-peptidylproline (omega=0). Functionally, involved in protein export. Acts as a chaperone by maintaining the newly synthesized protein in an open conformation. Functions as a peptidyl-prolyl cis-trans isomerase. The sequence is that of Trigger factor from Streptococcus pyogenes serotype M4 (strain MGAS10750).